A 328-amino-acid chain; its full sequence is Formyltetrahydrofolate deformylase 2, mitochondrial (328 aa).

A mitochondrion-targeting transit peptide spans 1-12 (MIRRVSTTSCLS). Residues 46-129 (FHVFHCPDVV…SVVRVPSLDP (84 aa)) enclose the ACT domain. Asp-272 is a catalytic residue.

The protein belongs to the PurU family. In terms of tissue distribution, expressed in leaves, cotyledons, roots, seeds and flowers.

It localises to the mitochondrion. The enzyme catalyses (6R)-10-formyltetrahydrofolate + H2O = (6S)-5,6,7,8-tetrahydrofolate + formate + H(+). In terms of biological role, deformylase involved in photorespiration. Prevents excessive accumulation of 5-formyl tetrahydrofolate (THF), a potent inhibitor of the Gly decarboxylase/Ser hydroxymethyltransferase complex. This chain is Formyltetrahydrofolate deformylase 2, mitochondrial (PURU2), found in Arabidopsis thaliana (Mouse-ear cress).